A 698-amino-acid polypeptide reads, in one-letter code: Sialic acid-binding Ig-like lectin 11 (698 aa).

Residues 1-27 (MVPGQAQPQSPEMLLLPLLLPVLGAGS) form the signal peptide. The Extracellular segment spans residues 28–561 (LNKDPSYSLQ…KLEHGGGLGL (534 aa)). Residues 31–134 (DPSYSLQVQR…DEAWYFFRVE (104 aa)) form the Ig-like V-type domain. Disulfide bonds link cysteine 49–cysteine 186, cysteine 54–cysteine 114, and cysteine 177–cysteine 228. N-linked (GlcNAc...) asparagine glycosylation is found at asparagine 55 and asparagine 90. Arginine 132 contributes to the N-acetylneuraminate binding site. Ig-like C2-type domains lie at 159–244 (PDVY…RTVR), 251–350 (PKDL…LDLS), and 355–452 (PENL…LSLS). Asparagine 262 carries N-linked (GlcNAc...) asparagine glycosylation. Cysteines 287 and 334 form a disulfide. 2 N-linked (GlcNAc...) asparagine glycosylation sites follow: asparagine 366 and asparagine 375. A disulfide bridge connects residues cysteine 391 and cysteine 436. 2 N-linked (GlcNAc...) asparagine glycosylation sites follow: asparagine 497 and asparagine 515. The helical transmembrane segment at 562 to 584 (GAALGAGVAALLAFCSCLVVFRV) threads the bilayer. Over 585–698 (KICRKEARKR…EREMSGMVPK (114 aa)) the chain is Cytoplasmic. The interval 596 to 635 (AAEQDVPSTLGPISQGHQHECSAGSSQDHPPPGAATYTPG) is disordered. An ITIM motif motif is present at residues 642 to 647 (LHYASL). Tyrosine 668 carries the phosphotyrosine modification. Residues 675 to 698 (TGQPLRGPGFGLQLEREMSGMVPK) are disordered.

The protein belongs to the immunoglobulin superfamily. SIGLEC (sialic acid binding Ig-like lectin) family. Interacts with PTPN6/SHP-1 and PTPN11/SHP-2 upon phosphorylation. Post-translationally, phosphorylated on tyrosine residues. Expressed by macrophages in various tissues including Kupffer cells. Also found in brain microglia.

It localises to the membrane. Its function is as follows. Putative adhesion molecule that mediates sialic-acid dependent binding to cells. Preferentially binds to alpha-2,8-linked sialic acid. The sialic acid recognition site may be masked by cis interactions with sialic acids on the same cell surface. In the immune response, may act as an inhibitory receptor upon ligand induced tyrosine phosphorylation by recruiting cytoplasmic phosphatase(s) via their SH2 domain(s) that block signal transduction through dephosphorylation of signaling molecules. This chain is Sialic acid-binding Ig-like lectin 11 (SIGLEC11), found in Homo sapiens (Human).